We begin with the raw amino-acid sequence, 473 residues long: MSPSDLHLPVPGHPIAAIATPVGVGALAIVRISGAGVLDLADRVFRKVHGSGKLAEAAGYTAHFGRLYDGEEMVDEVIALVFRAPRSFTAEQMVEFTCHGGPVVVGRVLRLMLDNGCRLAEPGEFTRRAFLNGRIDLLQAEAIGEMIHARTESAYRTAVSQMKGDLSVRLGGLREQLIRSCALIELELDFSEEDVEFQSRDELTMQIETLRSEVNRLIDSYQHGRIVSEGVSTVIAGKPNAGKSTLLNTLLGQERAIVSHMPGTTRDYIEECFIHDKTMFRLTDTAGLREAGEEIEHEGIRRSRMKMAEADLILYLLDLGTERLDDELTEIRELKAAHPAAKFLTVANKLDRAANADALIRAIADGTGTEVIGISALNGDGIDTLKQHMGDLVKNLDKLHEASVLVTSLRHYEALRNASDALQNALELIAHESETELIAFELRAALDYVGQITGKVVNEEVLNTIFDKFCIGK.

3 residues coordinate (6S)-5-formyl-5,6,7,8-tetrahydrofolate: Arg-31, Glu-95, and Arg-134. Positions 230–394 (GVSTVIAGKP…LKQHMGDLVK (165 aa)) constitute a TrmE-type G domain. Residues 240-245 (NAGKST), 259-265 (SHMPGTT), and 284-287 (DTAG) contribute to the GTP site. Mg(2+) is bound by residues Ser-244 and Thr-265. A (6S)-5-formyl-5,6,7,8-tetrahydrofolate-binding site is contributed by Lys-473.

It belongs to the TRAFAC class TrmE-Era-EngA-EngB-Septin-like GTPase superfamily. TrmE GTPase family. Homodimer. Heterotetramer of two MnmE and two MnmG subunits. K(+) is required as a cofactor.

Its subcellular location is the cytoplasm. Functionally, exhibits a very high intrinsic GTPase hydrolysis rate. Involved in the addition of a carboxymethylaminomethyl (cmnm) group at the wobble position (U34) of certain tRNAs, forming tRNA-cmnm(5)s(2)U34. In Chlorobaculum tepidum (strain ATCC 49652 / DSM 12025 / NBRC 103806 / TLS) (Chlorobium tepidum), this protein is tRNA modification GTPase MnmE.